Here is a 483-residue protein sequence, read N- to C-terminus: Phloretin 2'-O-glucosyltransferase (483 aa).

H15 functions as the Proton acceptor in the catalytic mechanism. H15 provides a ligand contact to an anthocyanidin. D118 (charge relay) is an active-site residue. The UDP-alpha-D-glucose site is built by T140, A360, Q362, H377, W380, N381, S382, and E385. A400 lines the an anthocyanidin pocket. UDP-alpha-D-glucose is bound by residues E401 and Q402.

It belongs to the UDP-glycosyltransferase family.

The catalysed reaction is phloretin + UDP-alpha-D-glucose = phlorizin + UDP + H(+). In terms of biological role, glycosyltransferase that possesses phloretin 2'-O-glycosyltransferase activity. Converts phloretin to phlorizin (phloretin 2'-O-glucoside), a potent antioxidant. Is specific for phloretin and does not possess glycosyltransferase activity toward caffeic acid, catechin, chlorogenic acid, 2-coumaric acid, 3-coumaric acid, 4-coumaric acid, cyanidin, 3,4-dihydroxyhydrocinnamic acid, epicatechin, 3-hydroxybenzoic acid, naringenin, 3,4-dihydroxybenzoic acid, quercetin and rutin. Can glycosylate phloretin in the presence of UDP-glucose, UDP-xylose and UDP-galactose. The protein is Phloretin 2'-O-glucosyltransferase of Malus domestica (Apple).